Consider the following 418-residue polypeptide: Putative ion-transport protein YfeO (418 aa).

A run of 12 helical transmembrane segments spans residues 10–30 (LLLSLPAVAIGIASSLILIVV), 54–74 (DSPFWIIAILTLTGIAVGLVI), 99–119 (ALPGLIVALILGLAGGVSLGP), 120–140 (EHPIMTVNIALAVAIGARLLP), 149–169 (ILASAGTIGALFGTPVAAALI), 186–206 (LFAPLMAAAAGALTTGLFFHP), 223–243 (ILSGAIVAAIAIAAGMVAVWC), 258–278 (VLMLGVGGFILGILGVIAGPV), 300–320 (DYFLLAVIKLAALVVAAASGF), 322–342 (GGRIFPAVFVGVALGLMLHEH), 343–363 (VPAVPAAITVSCAILGIVLVV), and 371–391 (LFMAAVVVPNTTLLPLLCIVM).

It belongs to the chloride channel (TC 2.A.49) family.

The protein localises to the cell membrane. The chain is Putative ion-transport protein YfeO from Escherichia coli (strain SMS-3-5 / SECEC).